Here is a 77-residue protein sequence, read N- to C-terminus: Ras-related C3 botulinum toxin substrate 1 (77 aa).

Position 22–24 (22–24) interacts with GTP; sequence KLD. Residue K53 forms a Glycyl lysine isopeptide (Lys-Gly) (interchain with G-Cter in ubiquitin) linkage. 65-66 contributes to the GTP binding site; it reads AL.

The protein belongs to the small GTPase superfamily. Rho family. As to quaternary structure, interacts with NISCH. Interacts with PIP5K1A. Interacts with the GTP-bound form of RAB7A. Interacts with SRGAP2. Interacts with CYFIP1/SRA-1. Interacts with PLXNB3. Interacts with ARHGDIA; the interaction is induced by SEMA5A, mediated through PLXNB3 and inactivates and stabilizes RAC1. Interacts (GTP-bound form preferentially) with PKN2 (via the REM repeats); the interaction stimulates autophosphorylation and phosphorylation of PKN2. Interacts with the GEF proteins PREX1, RASGRF2, FARP1, FARP2, DOCK1, DOCK2 and DOCK7, which promote the exchange between GDP and GTP, and therefore activate it. Interacts with PARD6A, PARD6B and PARD6G in a GTP-dependent manner. Part of a quaternary complex containing PARD3, some PARD6 protein (PARD6A, PARD6B or PARD6G) and some atypical PKC protein (PRKCI or PRKCZ), which plays a central role in epithelial cell polarization. Found in a trimeric complex composed of DOCK1 and ELMO1, which plays a central role in phagocytosis of apoptotic cells. Interacts with RALBP1 via its effector domain. Interacts with PLXNB1. Part of a complex with MAP2K3, MAP3K3, CCM2 and DEF6. Interacts with BAIAP2, BAIAP2L1 and DEF6. Interacts with Y.pseudotuberculosis YPKA and PLCB2. Interacts with NOXA1. Interacts with ARHGEF2. Interacts with TBC1D2. Interacts with UNKL. Interacts with USP6. Interacts with SPATA13. Interacts with ARHGEF16; mediates activation of RAC1 by EPHA2. Interacts with ITGB4. Interacts with S100A8 and calprotectin (S100A8/9). Interacts with PACSIN2. Interacts (when active) with PPP5C (via TPR repeats); activates PPP5C phosphatase activity and translocates PPP5C to the cell membrane. Interacts with RAPH1 (via Ras associating and PH domains). Interacts with MTSS2 (via IMD domain); this interaction may be important to potentiate PDGF-induced RAC1 activation. Interacts with PAK2. Interacts (GTP-bound form) with SH3RF1 and SH3RF3. Found in a complex with SH3RF1, MAPK8IP1/JIP1, MAP3K11/MLK3, MAP2K7/MKK7 and MAPK8/JNK1. Interacts (both active GTP- or inactive GDP-bound forms) with SH3RF2. Interacts (GTP-bound form preferentially) with CYRIB. Interacts with DOCK4 (via DOCKER domain); functions as a guanine nucleotide exchange factor (GEF) for RAC1. Interacts with GARRE1. Interacts with RAP1GDS1. May interact with ARHGAP36. Interacts with DSG3; the interaction is required for DSG3 translocation to cell-cell junctions, organization of cortical F-actin bundles and actin anchoring at cell-cell junctions. Component of the phagocyte NADPH oxidase complex composed of an obligatory core heterodimer formed by the membrane proteins CYBA and CYBB and the cytosolic regulatory subunits NCF1/p47-phox, NCF2/p67-phox, NCF4/p40-phox and the small GTPase RAC1 or RAC2. Interacts with NCF2. In terms of processing, the N-terminus is blocked. Post-translationally, GTP-bound active form is ubiquitinated by HACE1, leading to its degradation by the proteasome.

It is found in the cytoplasm. The protein resides in the membrane. The protein localises to the melanosome. It localises to the cell projection. Its subcellular location is the lamellipodium. It is found in the dendrite. The protein resides in the synapse. The protein localises to the nucleus. The enzyme catalyses GTP + H2O = GDP + phosphate + H(+). Regulated by guanine nucleotide exchange factors (GEFs) which promote the exchange of bound GDP for free GTP, GTPase activating proteins (GAPs) which increase the GTP hydrolysis activity, and GDP dissociation inhibitors which inhibit the dissociation of the nucleotide from the GTPase. GTP hydrolysis is stimulated by ARHGAP30. Its function is as follows. Plasma membrane-associated small GTPase which cycles between active GTP-bound and inactive GDP-bound states. In its active state, binds to a variety of effector proteins to regulate cellular responses such as secretory processes, phagocytosis of apoptotic cells, epithelial cell polarization, neurons adhesion, migration and differentiation, and growth-factor induced formation of membrane ruffles. Rac1 p21/rho GDI heterodimer is the active component of the cytosolic factor sigma 1, which is involved in stimulation of the NADPH oxidase activity in macrophages. Essential for the SPATA13-mediated regulation of cell migration and adhesion assembly and disassembly. Stimulates PKN2 kinase activity. In concert with RAB7A, plays a role in regulating the formation of RBs (ruffled borders) in osteoclasts. In podocytes, promotes nuclear shuttling of NR3C2; this modulation is required for a proper kidney functioning. Required for atypical chemokine receptor ACKR2-induced LIMK1-PAK1-dependent phosphorylation of cofilin (CFL1) and for up-regulation of ACKR2 from endosomal compartment to cell membrane, increasing its efficiency in chemokine uptake and degradation. In neurons, is involved in dendritic spine formation and synaptic plasticity. In hippocampal neurons, involved in spine morphogenesis and synapse formation, through local activation at synapses by guanine nucleotide exchange factors (GEFs), such as ARHGEF6/ARHGEF7/PIX. In synapses, seems to mediate the regulation of F-actin cluster formation performed by SHANK3. In neurons, plays a crucial role in regulating GABA(A) receptor synaptic stability and hence GABAergic inhibitory synaptic transmission through its role in PAK1 activation and eventually F-actin stabilization. Required for DSG3 translocation to cell-cell junctions, DSG3-mediated organization of cortical F-actin bundles and anchoring of actin at cell junctions; via interaction with DSG3. Subunit of the phagocyte NADPH oxidase complex that mediates the transfer of electrons from cytosolic NADPH to O2 to produce the superoxide anion (O2(-)). The protein is Ras-related C3 botulinum toxin substrate 1 of Cavia porcellus (Guinea pig).